We begin with the raw amino-acid sequence, 122 residues long: MIQMQSYLGVADNSGAKEVMCIKVLGGSKRRYASIGDVIKVTVKEAIPRGKVKKGEVYDAVVVRTRSGVRRPDGSLIRFDGNAAVLLNNKQEPIGTRVFGPVTRELRSEKLMKIVSLAPEVL.

The protein belongs to the universal ribosomal protein uL14 family. As to quaternary structure, part of the 50S ribosomal subunit. Forms a cluster with proteins L3 and L19. In the 70S ribosome, L14 and L19 interact and together make contacts with the 16S rRNA in bridges B5 and B8.

In terms of biological role, binds to 23S rRNA. Forms part of two intersubunit bridges in the 70S ribosome. In Xylella fastidiosa (strain M23), this protein is Large ribosomal subunit protein uL14.